Reading from the N-terminus, the 132-residue chain is Acetylcholinesterase (132 aa).

An N-linked (GlcNAc...) asparagine glycan is attached at Asn37. Cys45 and Cys72 are joined by a disulfide.

The protein belongs to the type-B carboxylesterase/lipase family.

It is found in the synapse. The protein resides in the secreted. The protein localises to the cell membrane. It carries out the reaction acetylcholine + H2O = choline + acetate + H(+). Its function is as follows. Rapidly hydrolyzes choline released into the synapse. This is Acetylcholinesterase (ACE-1) from Culex pipiens pipiens (Northern house mosquito).